Consider the following 347-residue polypeptide: Isopentenyl-diphosphate delta-isomerase (347 aa).

5-6 is a binding site for substrate; that stretch reads RK. Residues Ser-61, 62–64, Ser-92, and Asn-120 contribute to the FMN site; that span reads SMT. 92–94 is a substrate binding site; the sequence is SMR. Residue Gln-159 participates in substrate binding. Glu-160 lines the Mg(2+) pocket. FMN contacts are provided by residues Lys-189, Ser-214, Thr-219, 269 to 271, and 290 to 291; these read GLR and AR.

Belongs to the IPP isomerase type 2 family. In terms of assembly, homooctamer. Dimer of tetramers. FMN serves as cofactor. The cofactor is NADPH. Mg(2+) is required as a cofactor.

It is found in the cytoplasm. The enzyme catalyses isopentenyl diphosphate = dimethylallyl diphosphate. Involved in the biosynthesis of isoprenoids. Catalyzes the 1,3-allylic rearrangement of the homoallylic substrate isopentenyl (IPP) to its allylic isomer, dimethylallyl diphosphate (DMAPP). The sequence is that of Isopentenyl-diphosphate delta-isomerase from Thermoplasma volcanium (strain ATCC 51530 / DSM 4299 / JCM 9571 / NBRC 15438 / GSS1).